A 208-amino-acid chain; its full sequence is V-type ATP synthase subunit D (208 aa).

It belongs to the V-ATPase D subunit family.

Its function is as follows. Produces ATP from ADP in the presence of a proton gradient across the membrane. This chain is V-type ATP synthase subunit D, found in Streptococcus pyogenes serotype M49 (strain NZ131).